Consider the following 267-residue polypeptide: Undecaprenyl-diphosphatase 2 (267 aa).

Transmembrane regions (helical) follow at residues 4-24, 43-63, 84-104, 109-129, 147-167, 186-206, 219-239, and 243-263; these read IYFIKAFFLGVIEGITEFLPI, EEKVFEVVIQLGGILAVCWLF, FAVIVMISFLPSAIIGALFIH, VLFNTTVVATALIVGGLIILW, IGFKQAIIIGIAQCIAMIPGT, AATEYSFFLAIPTMLGAAIYD, ILAILIGFSAAFISALIVVNA, and FVAKHSLSVFAWYRIALGLII.

Belongs to the UppP family.

The protein localises to the cell inner membrane. It carries out the reaction di-trans,octa-cis-undecaprenyl diphosphate + H2O = di-trans,octa-cis-undecaprenyl phosphate + phosphate + H(+). Catalyzes the dephosphorylation of undecaprenyl diphosphate (UPP). Confers resistance to bacitracin. The polypeptide is Undecaprenyl-diphosphatase 2 (Shewanella oneidensis (strain ATCC 700550 / JCM 31522 / CIP 106686 / LMG 19005 / NCIMB 14063 / MR-1)).